The sequence spans 327 residues: tRNA-dihydrouridine(20/20a) synthase (327 aa).

FMN contacts are provided by residues 11 to 13 (PML) and Gln-63. Cys-93 (proton donor) is an active-site residue. Residues Lys-132, His-165, 205 to 207 (NGG), and 227 to 228 (GR) each bind FMN.

This sequence belongs to the Dus family. DusA subfamily. FMN is required as a cofactor.

The enzyme catalyses 5,6-dihydrouridine(20) in tRNA + NADP(+) = uridine(20) in tRNA + NADPH + H(+). It catalyses the reaction 5,6-dihydrouridine(20) in tRNA + NAD(+) = uridine(20) in tRNA + NADH + H(+). The catalysed reaction is 5,6-dihydrouridine(20a) in tRNA + NADP(+) = uridine(20a) in tRNA + NADPH + H(+). It carries out the reaction 5,6-dihydrouridine(20a) in tRNA + NAD(+) = uridine(20a) in tRNA + NADH + H(+). Its function is as follows. Catalyzes the synthesis of 5,6-dihydrouridine (D), a modified base found in the D-loop of most tRNAs, via the reduction of the C5-C6 double bond in target uridines. Specifically modifies U20 and U20a in tRNAs. The chain is tRNA-dihydrouridine(20/20a) synthase from Vibrio cholerae serotype O1 (strain ATCC 39315 / El Tor Inaba N16961).